Here is a 54-residue protein sequence, read N- to C-terminus: UPF0181 protein APJL_0874 (54 aa).

The protein belongs to the UPF0181 family.

The protein is UPF0181 protein APJL_0874 of Actinobacillus pleuropneumoniae serotype 3 (strain JL03).